The following is a 264-amino-acid chain: Thymidylate synthase (264 aa).

Arg21 is a binding site for dUMP. His51 lines the (6R)-5,10-methylene-5,6,7,8-tetrahydrofolate pocket. 126–127 (RR) contacts dUMP. The active-site Nucleophile is the Cys146. DUMP is bound by residues 166–169 (RSAD), Asn177, and 207–209 (HIY). (6R)-5,10-methylene-5,6,7,8-tetrahydrofolate is bound at residue Asp169. (6R)-5,10-methylene-5,6,7,8-tetrahydrofolate is bound at residue Ala263.

This sequence belongs to the thymidylate synthase family. Bacterial-type ThyA subfamily. In terms of assembly, homodimer.

Its subcellular location is the cytoplasm. It catalyses the reaction dUMP + (6R)-5,10-methylene-5,6,7,8-tetrahydrofolate = 7,8-dihydrofolate + dTMP. It participates in pyrimidine metabolism; dTTP biosynthesis. In terms of biological role, catalyzes the reductive methylation of 2'-deoxyuridine-5'-monophosphate (dUMP) to 2'-deoxythymidine-5'-monophosphate (dTMP) while utilizing 5,10-methylenetetrahydrofolate (mTHF) as the methyl donor and reductant in the reaction, yielding dihydrofolate (DHF) as a by-product. This enzymatic reaction provides an intracellular de novo source of dTMP, an essential precursor for DNA biosynthesis. This is Thymidylate synthase from Ruminiclostridium cellulolyticum (strain ATCC 35319 / DSM 5812 / JCM 6584 / H10) (Clostridium cellulolyticum).